An 88-amino-acid chain; its full sequence is MSTKNAKPKKEAQRRPSRKAKVKATLGEFDLRDYRNVEVLKRFLSETGKILPRRRTGLSAKEQRILAKTIKRARILGLLPFTEKLVRK.

The disordered stretch occupies residues 1–22 (MSTKNAKPKKEAQRRPSRKAKV).

Belongs to the bacterial ribosomal protein bS18 family. In terms of assembly, part of the 30S ribosomal subunit. Forms a tight heterodimer with protein bS6.

Its function is as follows. Binds as a heterodimer with protein bS6 to the central domain of the 16S rRNA, where it helps stabilize the platform of the 30S subunit. In Thermus thermophilus (strain ATCC BAA-163 / DSM 7039 / HB27), this protein is Small ribosomal subunit protein bS18 (rpsR).